A 362-amino-acid polypeptide reads, in one-letter code: Probable dual-specificity RNA methyltransferase RlmN (362 aa).

The active-site Proton acceptor is glutamate 105. The Radical SAM core domain occupies 111–344 (HEYGNSICVT…VTIRREQGHD (234 aa)). A disulfide bridge connects residues cysteine 118 and cysteine 349. Positions 125, 129, and 132 each coordinate [4Fe-4S] cluster. S-adenosyl-L-methionine is bound by residues 175-176 (GE), serine 207, 230-232 (SLH), and asparagine 306. Cysteine 349 functions as the S-methylcysteine intermediate in the catalytic mechanism.

The protein belongs to the radical SAM superfamily. RlmN family. [4Fe-4S] cluster is required as a cofactor.

Its subcellular location is the cytoplasm. It carries out the reaction adenosine(2503) in 23S rRNA + 2 reduced [2Fe-2S]-[ferredoxin] + 2 S-adenosyl-L-methionine = 2-methyladenosine(2503) in 23S rRNA + 5'-deoxyadenosine + L-methionine + 2 oxidized [2Fe-2S]-[ferredoxin] + S-adenosyl-L-homocysteine. The enzyme catalyses adenosine(37) in tRNA + 2 reduced [2Fe-2S]-[ferredoxin] + 2 S-adenosyl-L-methionine = 2-methyladenosine(37) in tRNA + 5'-deoxyadenosine + L-methionine + 2 oxidized [2Fe-2S]-[ferredoxin] + S-adenosyl-L-homocysteine. Specifically methylates position 2 of adenine 2503 in 23S rRNA and position 2 of adenine 37 in tRNAs. This is Probable dual-specificity RNA methyltransferase RlmN from Bacillus cereus (strain ATCC 14579 / DSM 31 / CCUG 7414 / JCM 2152 / NBRC 15305 / NCIMB 9373 / NCTC 2599 / NRRL B-3711).